Here is an 87-residue protein sequence, read N- to C-terminus: DNA-directed RNA polymerase subunit omega (87 aa).

Belongs to the RNA polymerase subunit omega family. In terms of assembly, the RNAP catalytic core consists of 2 alpha, 1 beta, 1 beta' and 1 omega subunit. When a sigma factor is associated with the core the holoenzyme is formed, which can initiate transcription.

The catalysed reaction is RNA(n) + a ribonucleoside 5'-triphosphate = RNA(n+1) + diphosphate. Its function is as follows. Promotes RNA polymerase assembly. Latches the N- and C-terminal regions of the beta' subunit thereby facilitating its interaction with the beta and alpha subunits. This is DNA-directed RNA polymerase subunit omega from Leifsonia xyli subsp. xyli (strain CTCB07).